Reading from the N-terminus, the 629-residue chain is MLITWLLDVLLLAPPVAAGYPPKPKNLITIESKALPGATITYKEVPKGVCGNVRSYSGYINFPPNSMREAPQDFPVHIYFWYFESQVKPETDPLAIYINGGPGAGSMVGVFVESGPCRMSEDAQSTVLNEHSWNKEANLLYIDQPVQTGFSYDVLTNATFDFKTNILSPEGPDHDPSKDGTLLAGTFGSGDPSKTANTTLNAARHMWNIVQVWSQDFSPYADNRENDKISLWSESYGGRYAPGFMAYFLQQNNRIKAGLLTGSVLHLDTVGIINGCVDLISQQKSNIDFPYNKNTYGIQAIDDAGYDKAMHAYGKRGGCLDQILECHALAKRYDPNAYGHVDEVNYVCERANSYCNTEVDGIYVDGAKRGLFDIAQCHLDPFPSNSFLGYLAKTEVQEALGVPANHTDPSYTVEHVFNVTGDYVRSDRGGHLLDIANLLDARVKVAMVYGDRDFICNWVGAENVSLSVDYKDAKNFRRAGYADVYTDDSGVPKAQVRQHGLFSFTRVYQAGHMMLAYQPQVGYEIFRRAMFNMDIATGTVTDDIEFYSTQGEVNSTHAEPPLPTVPPTCNFWGMAMSCAKNQIEAIQKGEASIVNNIIVSPTQARGECPTPQPTRKSWFYNNEQQSFII.

The signal sequence occupies residues Met-1–Ala-18. N-linked (GlcNAc...) asparagine glycosylation is found at Asn-157 and Asn-197. Ser-235 is a catalytic residue. Residues Cys-326 and Cys-355 are joined by a disulfide bond. N-linked (GlcNAc...) asparagine glycans are attached at residues Asn-405 and Asn-418. The active site involves Asp-453. Cys-456 is a binding site for substrate. Residues Asn-463 and Asn-554 are each glycosylated (N-linked (GlcNAc...) asparagine).

It belongs to the peptidase S10 family.

It localises to the secreted. The enzyme catalyses Release of a C-terminal amino acid with broad specificity.. Its function is as follows. Involved in degradation of small peptides. The protein is Carboxypeptidase Y homolog ARB_06361 of Arthroderma benhamiae (strain ATCC MYA-4681 / CBS 112371) (Trichophyton mentagrophytes).